Consider the following 255-residue polypeptide: Small ribosomal subunit protein uS2 (255 aa).

A disordered region spans residues 232 to 255; the sequence is ASGRDLGASEEVPVEPALEEASEA.

This sequence belongs to the universal ribosomal protein uS2 family.

This chain is Small ribosomal subunit protein uS2, found in Rhizobium meliloti (strain 1021) (Ensifer meliloti).